A 166-amino-acid chain; its full sequence is Lipoprotein signal peptidase (166 aa).

A run of 3 helical transmembrane segments spans residues 12 to 32 (WLWLVVVVLIIDLGSKYLILQ), 70 to 90 (WFFAGIAIGICVILLVMMYRS), and 102 to 122 (ALIIGGALGNLFDRLWHGFVV). Active-site residues include aspartate 123 and aspartate 141. The chain crosses the membrane as a helical span at residues 137 to 157 (FNLADSAICIGAALIVLEGFL).

This sequence belongs to the peptidase A8 family.

The protein localises to the cell inner membrane. The catalysed reaction is Release of signal peptides from bacterial membrane prolipoproteins. Hydrolyzes -Xaa-Yaa-Zaa-|-(S,diacylglyceryl)Cys-, in which Xaa is hydrophobic (preferably Leu), and Yaa (Ala or Ser) and Zaa (Gly or Ala) have small, neutral side chains.. Its pathway is protein modification; lipoprotein biosynthesis (signal peptide cleavage). Functionally, this protein specifically catalyzes the removal of signal peptides from prolipoproteins. The chain is Lipoprotein signal peptidase from Salmonella agona (strain SL483).